The chain runs to 96 residues: MRPFLVFVLIVSVSLAFSFEDMPNKGGDSVASITADQARGHKRNPLFPFAQRSLTELKAGGCPLYCSSQIFCCHGRKCRNVDGRLKCVTEASMLGK.

The signal sequence occupies residues 1-16 (MRPFLVFVLIVSVSLA). A propeptide spanning residues 17-52 (FSFEDMPNKGGDSVASITADQARGHKRNPLFPFAQR) is cleaved from the precursor.

Post-translationally, contains 3 disulfide bonds. Expressed by the venom duct.

Its subcellular location is the secreted. The recombinant protein causes paralysis to polychaete worms (Nereis virens), the natural prey of terebrid snails. This chain is Teretoxin Tgu6.1, found in Terebra guttata (White spotted auger snail).